The chain runs to 462 residues: Argininosuccinate lyase (462 aa).

It belongs to the lyase 1 family. Argininosuccinate lyase subfamily.

The protein localises to the cytoplasm. It catalyses the reaction 2-(N(omega)-L-arginino)succinate = fumarate + L-arginine. The protein operates within amino-acid biosynthesis; L-arginine biosynthesis; L-arginine from L-ornithine and carbamoyl phosphate: step 3/3. The chain is Argininosuccinate lyase from Methylobacterium nodulans (strain LMG 21967 / CNCM I-2342 / ORS 2060).